Reading from the N-terminus, the 115-residue chain is U3-lycotoxin-Ls1e (115 aa).

The N-terminal stretch at 1 to 20 (MKFVLLFGVLSLTLFSYSSA) is a signal peptide. Residues 21-44 (EMLDDFDQADEDELLSLIEKEEAR) constitute a propeptide that is removed on maturation. 4 disulfide bridges follow: cysteine 48-cysteine 63, cysteine 55-cysteine 72, cysteine 62-cysteine 87, and cysteine 74-cysteine 85.

This sequence belongs to the neurotoxin 19 (CSTX) family. 01 subfamily. In terms of tissue distribution, expressed by the venom gland.

Its subcellular location is the secreted. The protein is U3-lycotoxin-Ls1e of Lycosa singoriensis (Wolf spider).